Here is a 488-residue protein sequence, read N- to C-terminus: Proline--tRNA ligase (488 aa).

Belongs to the class-II aminoacyl-tRNA synthetase family. ProS type 3 subfamily. As to quaternary structure, homodimer.

The protein localises to the cytoplasm. It carries out the reaction tRNA(Pro) + L-proline + ATP = L-prolyl-tRNA(Pro) + AMP + diphosphate. In terms of biological role, catalyzes the attachment of proline to tRNA(Pro) in a two-step reaction: proline is first activated by ATP to form Pro-AMP and then transferred to the acceptor end of tRNA(Pro). Can inadvertently accommodate and process cysteine. This Borreliella burgdorferi (strain ATCC 35210 / DSM 4680 / CIP 102532 / B31) (Borrelia burgdorferi) protein is Proline--tRNA ligase (proS).